A 365-amino-acid polypeptide reads, in one-letter code: Methylthioribose-1-phosphate isomerase (365 aa).

Aspartate 249 serves as the catalytic Proton donor.

It belongs to the eIF-2B alpha/beta/delta subunits family. MtnA subfamily.

It localises to the cytoplasm. It is found in the nucleus. It catalyses the reaction 5-(methylsulfanyl)-alpha-D-ribose 1-phosphate = 5-(methylsulfanyl)-D-ribulose 1-phosphate. It functions in the pathway amino-acid biosynthesis; L-methionine biosynthesis via salvage pathway; L-methionine from S-methyl-5-thio-alpha-D-ribose 1-phosphate: step 1/6. Catalyzes the interconversion of methylthioribose-1-phosphate (MTR-1-P) into methylthioribulose-1-phosphate (MTRu-1-P). The chain is Methylthioribose-1-phosphate isomerase from Ostreococcus lucimarinus (strain CCE9901).